Reading from the N-terminus, the 260-residue chain is Thiazole synthase (260 aa).

Residue K96 is the Schiff-base intermediate with DXP of the active site. Residues G157, 184 to 185 (AG), and 206 to 207 (NT) each bind 1-deoxy-D-xylulose 5-phosphate.

This sequence belongs to the ThiG family. As to quaternary structure, homotetramer. Forms heterodimers with either ThiH or ThiS.

It is found in the cytoplasm. The catalysed reaction is [ThiS sulfur-carrier protein]-C-terminal-Gly-aminoethanethioate + 2-iminoacetate + 1-deoxy-D-xylulose 5-phosphate = [ThiS sulfur-carrier protein]-C-terminal Gly-Gly + 2-[(2R,5Z)-2-carboxy-4-methylthiazol-5(2H)-ylidene]ethyl phosphate + 2 H2O + H(+). Its pathway is cofactor biosynthesis; thiamine diphosphate biosynthesis. Functionally, catalyzes the rearrangement of 1-deoxy-D-xylulose 5-phosphate (DXP) to produce the thiazole phosphate moiety of thiamine. Sulfur is provided by the thiocarboxylate moiety of the carrier protein ThiS. In vitro, sulfur can be provided by H(2)S. This Bradyrhizobium sp. (strain ORS 278) protein is Thiazole synthase.